Here is a 689-residue protein sequence, read N- to C-terminus: Glycine--tRNA ligase beta subunit (689 aa).

It belongs to the class-II aminoacyl-tRNA synthetase family. As to quaternary structure, tetramer of two alpha and two beta subunits.

The protein resides in the cytoplasm. It catalyses the reaction tRNA(Gly) + glycine + ATP = glycyl-tRNA(Gly) + AMP + diphosphate. The chain is Glycine--tRNA ligase beta subunit from Enterobacter sp. (strain 638).